The chain runs to 198 residues: Recombination protein RecR (198 aa).

A C4-type zinc finger spans residues 57–72; the sequence is CSVCGHITDQDPCYIC. Residues 80–175 enclose the Toprim domain; the sequence is SVICVVQDPK…KLSRIAHGLP (96 aa).

Belongs to the RecR family.

May play a role in DNA repair. It seems to be involved in an RecBC-independent recombinational process of DNA repair. It may act with RecF and RecO. The chain is Recombination protein RecR from Bacillus pumilus (strain SAFR-032).